The following is a 519-amino-acid chain: Cytosol aminopeptidase (519 aa).

Phosphoserine is present on serine 42. Residue lysine 45 is modified to N6-succinyllysine. Serine 54 is modified (phosphoserine). Residues lysine 61 and lysine 103 each carry the N6-succinyllysine modification. Phosphoserine is present on residues serine 180 and serine 194. Residues leucine 202, methionine 203, and threonine 205 each contribute to the Zn(2+) site. At lysine 221 the chain carries N6-acetyllysine; alternate. Lysine 221 is subject to N6-succinyllysine; alternate. Serine 238 carries the post-translational modification Phosphoserine. Zn(2+) is bound by residues lysine 282 and aspartate 287. Residues lysine 282, aspartate 287, serine 292, and lysine 294 each coordinate substrate. Aspartate 287 provides a ligand contact to Mg(2+). Lysine 294 is a catalytic residue. Residues arginine 303, aspartate 305, aspartate 364, and glutamate 366 each coordinate Zn(2+). Residues aspartate 305 and aspartate 364 each contribute to the substrate site. Positions 364 and 366 each coordinate Mg(2+). Arginine 368 is a catalytic residue. Lysine 455 carries the N6-acetyllysine; alternate modification. Lysine 455 bears the N6-succinyllysine; alternate mark. At lysine 476 the chain carries N6-succinyllysine. Lysine 489 is modified (N6-acetyllysine; alternate). The residue at position 489 (lysine 489) is an N6-succinyllysine; alternate.

The protein belongs to the peptidase M17 family. As to quaternary structure, homohexamer. Zn(2+) serves as cofactor. Requires Mn(2+) as cofactor.

The protein resides in the cytoplasm. It carries out the reaction Release of an N-terminal amino acid, Xaa-|-Yaa-, in which Xaa is preferably Leu, but may be other amino acids including Pro although not Arg or Lys, and Yaa may be Pro. Amino acid amides and methyl esters are also readily hydrolyzed, but rates on arylamides are exceedingly low.. The enzyme catalyses an S-substituted L-cysteinylglycine + H2O = an S-substituted L-cysteine + glycine. It catalyses the reaction L-cysteinylglycine + H2O = L-cysteine + glycine. The catalysed reaction is S-benzyl-L-cysteinylglycine + H2O = S-benzyl-L-cysteine + glycine. It carries out the reaction Release of N-terminal proline from a peptide.. In terms of biological role, cytosolic metallopeptidase that catalyzes the removal of unsubstituted N-terminal hydrophobic amino acids from various peptides. The presence of Zn(2+) ions is essential for the peptidase activity, and the association with other cofactors can modulate the substrate spectificity of the enzyme. For instance, in the presence of Mn(2+), it displays a specific Cys-Gly hydrolyzing activity of Cys-Gly-S-conjugates. Involved in the metabolism of glutathione and in the degradation of glutathione S-conjugates, which may play a role in the control of the cell redox status. This Sus scrofa (Pig) protein is Cytosol aminopeptidase.